Consider the following 301-residue polypeptide: MLKSSKKEDSSKKNQNNNLIFTVRKLFSPIKNFFRTTKTPDNFFGVIKRLKINIQKMTLDERNILANLLELEDKTIEDIMVPRSDIVAIKLTANLAELSESIKLEVPHTRTLIYDGTLDNVVGFIHIKDLFKALATKQNGRLKKLIRKHIIAAPSMKLLDLLAKMRRERTHIAIVVDEYGGTDGLVTIEDLIEEIVGRIDDEHDQQLDSDNFKVINNSTIISNARVEVEVLEEIIGEKLKNDDDEFDTIGGLVLTRVSSVPVIGTRIDISENIEIEVTDATPRSLKQVKIRLKNGLHSDKI.

CBS domains lie at 80–142 and 145–202; these read MVPR…NGRL and LIRK…IDDE.

This sequence belongs to the UPF0053 family. Hemolysin C subfamily.

The polypeptide is Possible hemolysin C (tlyC) (Rickettsia akari (strain Hartford)).